A 78-amino-acid polypeptide reads, in one-letter code: Acyl carrier protein (78 aa).

Residues 2–77 (SDTAERVKKI…DAVKFIDKAS (76 aa)) enclose the Carrier domain. Residue Ser37 is modified to O-(pantetheine 4'-phosphoryl)serine.

The protein belongs to the acyl carrier protein (ACP) family. 4'-phosphopantetheine is transferred from CoA to a specific serine of apo-ACP by AcpS. This modification is essential for activity because fatty acids are bound in thioester linkage to the sulfhydryl of the prosthetic group.

Its subcellular location is the cytoplasm. The protein operates within lipid metabolism; fatty acid biosynthesis. In terms of biological role, carrier of the growing fatty acid chain in fatty acid biosynthesis. This is Acyl carrier protein from Brucella abortus (strain S19).